A 206-amino-acid polypeptide reads, in one-letter code: Recombination protein RecR (206 aa).

Residues 60–75 (CARCNTFCEGGLCDIC) form a C4-type zinc finger. One can recognise a Toprim domain in the interval 83 to 178 (RRLMVVHMPA…KVSRLSQGIP (96 aa)).

It belongs to the RecR family.

Its function is as follows. May play a role in DNA repair. It seems to be involved in an RecBC-independent recombinational process of DNA repair. It may act with RecF and RecO. The protein is Recombination protein RecR of Neisseria gonorrhoeae (strain NCCP11945).